A 943-amino-acid polypeptide reads, in one-letter code: Isoleucine--tRNA ligase (943 aa).

A 'HIGH' region motif is present at residues 59–69 (PYANGQIHLGH). L-isoleucyl-5'-AMP is bound at residue Glu577. Residues 618-622 (KMSKS) carry the 'KMSKS' region motif. Position 621 (Lys621) interacts with ATP. The Zn(2+) site is built by Cys906, Cys909, Cys926, and Cys929.

It belongs to the class-I aminoacyl-tRNA synthetase family. IleS type 1 subfamily. As to quaternary structure, monomer. Zn(2+) serves as cofactor.

The protein localises to the cytoplasm. The catalysed reaction is tRNA(Ile) + L-isoleucine + ATP = L-isoleucyl-tRNA(Ile) + AMP + diphosphate. Its function is as follows. Catalyzes the attachment of isoleucine to tRNA(Ile). As IleRS can inadvertently accommodate and process structurally similar amino acids such as valine, to avoid such errors it has two additional distinct tRNA(Ile)-dependent editing activities. One activity is designated as 'pretransfer' editing and involves the hydrolysis of activated Val-AMP. The other activity is designated 'posttransfer' editing and involves deacylation of mischarged Val-tRNA(Ile). The polypeptide is Isoleucine--tRNA ligase (Xanthomonas campestris pv. campestris (strain 8004)).